We begin with the raw amino-acid sequence, 295 residues long: Acetylglutamate kinase (295 aa).

Substrate contacts are provided by residues 66-67 (GG), arginine 88, and asparagine 193.

This sequence belongs to the acetylglutamate kinase family. ArgB subfamily.

Its subcellular location is the cytoplasm. The enzyme catalyses N-acetyl-L-glutamate + ATP = N-acetyl-L-glutamyl 5-phosphate + ADP. It participates in amino-acid biosynthesis; L-arginine biosynthesis; N(2)-acetyl-L-ornithine from L-glutamate: step 2/4. Its function is as follows. Catalyzes the ATP-dependent phosphorylation of N-acetyl-L-glutamate. The polypeptide is Acetylglutamate kinase (Sinorhizobium medicae (strain WSM419) (Ensifer medicae)).